We begin with the raw amino-acid sequence, 501 residues long: TGF-beta receptor type-1 (501 aa).

Residues 1–29 (MEAASAALRRCLLLIVLVAAATLLPGAKA) form the signal peptide. The Extracellular segment spans residues 30-124 (LQCFCHLCTK…QSAGLGPVEL (95 aa)). Intrachain disulfides connect Cys32-Cys50, Cys34-Cys37, Cys44-Cys67, Cys82-Cys94, and Cys95-Cys100. N-linked (GlcNAc...) asparagine glycosylation is present at Asn41. A helical transmembrane segment spans residues 125–145 (AAVIAGPVCFVCIALMLMVYI). At 146–501 (CHNRTVIHHR…QLSQQEGIKM (356 aa)) the chain is on the cytoplasmic side. Ser163 carries the phosphoserine modification. Residues 173-202 (TTLKDLIYDMTTSGSGSGLPLLVQRTIART) form the GS domain. 2 positions are modified to phosphothreonine; by TGFBR2: Thr183 and Thr184. 3 positions are modified to phosphoserine; by TGFBR2: Ser185, Ser187, and Ser189. The short motif at 191 to 192 (LP) is the FKBP1A-binding element. The Protein kinase domain maps to 203–493 (IVLQESIGKG…LRIKKTLSQL (291 aa)). Residues 209–217 (IGKGRFGEV) and Lys230 each bind ATP. Residue Asp331 is the Proton acceptor of the active site. Residue Lys389 forms a Glycyl lysine isopeptide (Lys-Gly) (interchain with G-Cter in SUMO) linkage.

It belongs to the protein kinase superfamily. TKL Ser/Thr protein kinase family. TGFB receptor subfamily. In terms of assembly, homodimer; in the endoplasmic reticulum but also at the cell membrane. Heterohexamer; TGFB1, TGFB2 and TGFB3 homodimeric ligands assemble a functional receptor composed of two TGFBR1 and TGFBR2 heterodimers to form a ligand-receptor heterohexamer. The respective affinity of TGBRB1 and TGFBR2 for the ligands may modulate the kinetics of assembly of the receptor and may explain the different biological activities of TGFB1, TGFB2 and TGFB3. Component of a complex composed of TSC22D1 (via N-terminus), TGFBR1 and TGFBR2; the interaction between TSC22D1 and TGFBR1 is inhibited by SMAD7 and promoted by TGFB1. Interacts with CD109; inhibits TGF-beta receptor activation in keratinocytes. Interacts with RBPMS. Interacts with SMAD2, SMAD3 and ZFYVE9; ZFYVE9 recruits SMAD2 and SMAD3 to the TGF-beta receptor. Interacts with TRAF6 and MAP3K7; induces MAP3K7 activation by TRAF6. Interacts with PARD6A; involved in TGF-beta induced epithelial to mesenchymal transition. Interacts with NEDD4L. Interacts with SMAD7, SMURF1 and SMURF2; SMAD7 recruits NEDD4L, SMURF1 and SMURF2 to the TGF-beta receptor. Interacts with USP15 and VPS39. Interacts (unphosphorylated) with FKBP1A; prevents TGFBR1 phosphorylation by TGFBR2 and stabilizes it in the inactive conformation. Interacts with SDCBP (via C-terminus). Interacts with CAV1 and this interaction is impaired in the presence of SDCBP. Interacts with APPL1; interaction is TGF beta dependent; mediates trafficking of the TGFBR1 from the endosomes to the nucleus via microtubules in a TRAF6-dependent manner. Interacts with GPR50; this interaction promotes the constitutive activation of SMAD signaling pathway. The cofactor is Mg(2+). Mn(2+) is required as a cofactor. Post-translationally, phosphorylated at basal levels in the absence of ligand. Activated upon phosphorylation by TGFBR2, mainly in the GS domain. Phosphorylation in the GS domain abrogates FKBP1A-binding. In terms of processing, N-Glycosylated. Ubiquitinated; undergoes ubiquitination catalyzed by several E3 ubiquitin ligases including SMURF1, SMURF2 and NEDD4L2. Results in the proteasomal and/or lysosomal degradation of the receptor thereby negatively regulating its activity. Deubiquitinated by USP15, leading to stabilization of the protein and enhanced TGF-beta signal. Its ubiquitination and proteasome-mediated degradation is negatively regulated by SDCBP. In terms of tissue distribution, urogenital ridge, testis, ovary, brain and lungs.

It localises to the cell membrane. It is found in the cell junction. The protein resides in the tight junction. The protein localises to the membrane raft. Its subcellular location is the cell surface. It carries out the reaction L-threonyl-[receptor-protein] + ATP = O-phospho-L-threonyl-[receptor-protein] + ADP + H(+). It catalyses the reaction L-seryl-[receptor-protein] + ATP = O-phospho-L-seryl-[receptor-protein] + ADP + H(+). Its activity is regulated as follows. Kept in an inactive conformation by FKBP1A preventing receptor activation in absence of ligand. CD109 is another inhibitor of the receptor. Transmembrane serine/threonine kinase forming with the TGF-beta type II serine/threonine kinase receptor, TGFBR2, the non-promiscuous receptor for the TGF-beta cytokines TGFB1, TGFB2 and TGFB3. Transduces the TGFB1, TGFB2 and TGFB3 signal from the cell surface to the cytoplasm and is thus regulating a plethora of physiological and pathological processes including cell cycle arrest in epithelial and hematopoietic cells, control of mesenchymal cell proliferation and differentiation, wound healing, extracellular matrix production, immunosuppression and carcinogenesis. The formation of the receptor complex composed of 2 TGFBR1 and 2 TGFBR2 molecules symmetrically bound to the cytokine dimer results in the phosphorylation and the activation of TGFBR1 by the constitutively active TGFBR2. Activated TGFBR1 phosphorylates SMAD2 which dissociates from the receptor and interacts with SMAD4. The SMAD2-SMAD4 complex is subsequently translocated to the nucleus where it modulates the transcription of the TGF-beta-regulated genes. This constitutes the canonical SMAD-dependent TGF-beta signaling cascade. Also involved in non-canonical, SMAD-independent TGF-beta signaling pathways. For instance, TGFBR1 induces TRAF6 autoubiquitination which in turn results in MAP3K7 ubiquitination and activation to trigger apoptosis. Also regulates epithelial to mesenchymal transition through a SMAD-independent signaling pathway through PARD6A phosphorylation and activation. The protein is TGF-beta receptor type-1 (Tgfbr1) of Rattus norvegicus (Rat).